A 284-amino-acid chain; its full sequence is MVLMIVSGRSGSGKSVALRALEDMGFYCVDNLPVVLLPDLARTLADREISAAVSIDVRNMPESPEIFEQAMSNLPDAFSPQLLFLDADRNTLIRRYSDTRRLHPLSNKNLSLESAIDKESDLLEPLRSRADLIVDTSEMSVHELAEMLRTRLLGKRERELTMVFESFGFKHGIPIDADYVFDVRFLPNPHWDPKLRPMTGLDKPVAAFLDRHTEVHNFIYQTRSYLELWLPMLETNNRSYLTVAIGCTGGKHRSVYIAEQLADYFRSRGKNVQSRHRTLEKRKP.

8–15 (GRSGSGKS) lines the ATP pocket. 56-59 (DVRN) is a GTP binding site. Residues 266-284 (RSRGKNVQSRHRTLEKRKP) form an RNA-binding region.

It belongs to the RapZ-like family. RapZ subfamily. As to quaternary structure, homotrimer.

Its function is as follows. Modulates the synthesis of GlmS, by affecting the processing and stability of the regulatory small RNA GlmZ. When glucosamine-6-phosphate (GlcN6P) concentrations are high in the cell, RapZ binds GlmZ and targets it to cleavage by RNase E. Consequently, GlmZ is inactivated and unable to activate GlmS synthesis. Under low GlcN6P concentrations, RapZ is sequestered and inactivated by an other regulatory small RNA, GlmY, preventing GlmZ degradation and leading to synthesis of GlmS. This Shigella dysenteriae serotype 1 (strain Sd197) protein is RNase adapter protein RapZ.